The following is a 143-amino-acid chain: Transcription antitermination protein NusB (143 aa).

The protein belongs to the NusB family.

Its function is as follows. Involved in transcription antitermination. Required for transcription of ribosomal RNA (rRNA) genes. Binds specifically to the boxA antiterminator sequence of the ribosomal RNA (rrn) operons. The protein is Transcription antitermination protein NusB of Streptomyces griseus subsp. griseus (strain JCM 4626 / CBS 651.72 / NBRC 13350 / KCC S-0626 / ISP 5235).